The primary structure comprises 954 residues: MLQALQKLLGDPNERKIRKYLPVVKLINSLEIEIASLSDAELRAKTTEFRQRLDRGESLDDLLPEAFAVVREAAKRVLNLRHYDVQLIGGMVLHEGQIAEMKTGEGKTLVATLPAYLNGLTGKGVHIVTVNGYLARRDSEWMGQVHRFLGLTVGLVQEGMSTDEKRRSYHCDITYCTNSELGFDYLRDNMATDIKEVMQRPFNYCIIDEVDSILIDEARTPLIISGQMARPSEKYLKAAQVARELIRDEHYEVDEKARNVILTDEGFEAAERLLGVSDLFDPKDPWAHFVFNAVKAKELFIRDVHYIVRNQEVVIVDEFTGRVLPGRRWSDGLHQAVEAKEGVPIQNESQTLATITYQNLFLLYPKLSGMTGTARTEEAEFSKTYNLEVTVIPTNRPIRRKDAPDLVYKTENAKWKAVAEEIAHMHAQGRPVLVGTTSVEKSERLSAMLKEMGIPHNLLNAKPENVEREAEIIAQAGRKGAVTIATNMAGRGTDIILGGNAEYMARLKLRERLMPKLVQLDPDNPLGSASTTSRGGGQGFGPASPKPKKSWTVVSPNFYPCELSARTSQALDEVVAAAVAKYGLNRLPELVVEDLIAVASEKAPVQDPLILQLREVYNSIKAEYEKVTEAEHEEVVRLGGLHVIGTERHESRRIDNQLRGRAGRQGDPGSSRFFLSLEDNLLKIFGGERVAKLMDMFRVDEDMPIEHPLLSSSLENAQRKVEVYYFDLRKQVFEYDEVMNNQRRAIYSERRRILEGENLKPKILDYMRKTVEEIVRAHVNPELPPEEWEIDKLTAKMQEFVPLLKENLKADDLRDLSYQEILDHLIKQAELAYEAKEAFLDTFEPGLMRKAERFFLLQQVDTLWREHLQQMEALREAVGLRGYGQRDPLIEYKNEGYELFLEMMDNIRRNTVYNLFVFTPQLVQVPQVAQAVPAQAVAASPETGGVVEADFAED.

ATP-binding positions include Gln86, 104-108 (GEGKT), and Asp494. Residues 520 to 549 (LDPDNPLGSASTTSRGGGQGFGPASPKPKK) are disordered.

The protein belongs to the SecA family. In terms of assembly, monomer and homodimer. Part of the essential Sec protein translocation apparatus which comprises SecA, SecYEG and auxiliary proteins SecDF. Other proteins may also be involved.

The protein localises to the cell inner membrane. The protein resides in the cellular thylakoid membrane. It localises to the cytoplasm. It catalyses the reaction ATP + H2O + cellular proteinSide 1 = ADP + phosphate + cellular proteinSide 2.. Functionally, part of the Sec protein translocase complex. Interacts with the SecYEG preprotein conducting channel. Has a central role in coupling the hydrolysis of ATP to the transfer of proteins into and across the cell membrane, serving as an ATP-driven molecular motor driving the stepwise translocation of polypeptide chains across the membrane. In terms of biological role, probably participates in protein translocation into and across both the cytoplasmic and thylakoid membranes in cyanobacterial cells. The protein is Protein translocase subunit SecA of Synechococcus sp. (strain JA-3-3Ab) (Cyanobacteria bacterium Yellowstone A-Prime).